Consider the following 187-residue polypeptide: MAKNLILLGLPGAGKGTQADFIVKDYSIVHISTGDIFRANLAENTELGQKARQFMDAGDLVPDEITNAMVADRLNQQDVETGFMLDGYPRNEAQAVFLDKYLSDNGKSVSATLYFEVADTLLRERLLGRGRADDTPEVIDNRLAVNKAANLPLVDYYQKAGVLHTIDGGRELADVYHDVKEVLDNLN.

12-17 (GAGKGT) is a binding site for ATP. The interval 32–61 (STGDIFRANLAENTELGQKARQFMDAGDLV) is NMP. AMP is bound by residues Thr-33, Arg-38, 59 to 61 (DLV), 87 to 90 (GYPR), and Gln-94. An LID region spans residues 128–134 (GRGRADD). ATP is bound at residue Arg-129. Positions 131 and 142 each coordinate AMP. An ATP-binding site is contributed by Arg-170.

This sequence belongs to the adenylate kinase family. In terms of assembly, monomer.

The protein localises to the cytoplasm. It carries out the reaction AMP + ATP = 2 ADP. The protein operates within purine metabolism; AMP biosynthesis via salvage pathway; AMP from ADP: step 1/1. Functionally, catalyzes the reversible transfer of the terminal phosphate group between ATP and AMP. Plays an important role in cellular energy homeostasis and in adenine nucleotide metabolism. This Leuconostoc mesenteroides subsp. mesenteroides (strain ATCC 8293 / DSM 20343 / BCRC 11652 / CCM 1803 / JCM 6124 / NCDO 523 / NBRC 100496 / NCIMB 8023 / NCTC 12954 / NRRL B-1118 / 37Y) protein is Adenylate kinase.